A 1892-amino-acid chain; its full sequence is Plexin A3 (1892 aa).

The first 20 residues, Met1–Ala20, serve as a signal peptide directing secretion. In terms of domain architecture, Sema spans Phe21–Val509. The Extracellular portion of the chain corresponds to Phe21–Pro1240. A glycan (N-linked (GlcNAc...) asparagine) is linked at Asn68. Cystine bridges form between Cys86–Cys95, Cys121–Cys129, Cys283–Cys404, Cys299–Cys355, Cys373–Cys392, Cys512–Cys529, Cys518–Cys560, Cys521–Cys538, and Cys532–Cys544. N-linked (GlcNAc...) asparagine glycosylation is present at Asn569. Cys595 and Cys615 are disulfide-bonded. 4 IPT/TIG domains span residues Pro861 to Val955, Pro957 to Thr1041, Pro1044 to Tyr1143, and Pro1146 to Tyr1232. An N-linked (GlcNAc...) asparagine glycan is attached at Asn1183. The helical transmembrane segment at Ala1241–Ile1261 threads the bilayer. Residues Ala1262–Ile1315 are a coiled coil. Over Ala1262–Ser1892 the chain is Cytoplasmic.

The protein belongs to the plexin family. In terms of tissue distribution, detected in primary motor neurons in the embryonic nervous system.

The protein resides in the cell membrane. Coreceptor for class 3 semaphorins. Necessary for signaling by class 3 semaphorins and subsequent remodeling of the cytoskeleton. Plays a role in axon guidance in the developing nervous system. Class 3 semaphorins bind to a complex composed of a neuropilin and a plexin. The plexin modulates the affinity of the complex for specific semaphorins, and its cytoplasmic domain is required for the activation of down-stream signaling events in the cytoplasm. In Danio rerio (Zebrafish), this protein is Plexin A3 (plxna3).